The sequence spans 336 residues: Holliday junction branch migration complex subunit RuvB (336 aa).

The interval 4-184 (ADRLISATGV…FGIVQRLEFY (181 aa)) is large ATPase domain (RuvB-L). Residues Ile23, Arg24, Gly65, Lys68, Thr69, Thr70, 131 to 133 (EDY), Arg174, Tyr184, and Arg221 each bind ATP. Mg(2+) is bound at residue Thr69. The small ATPAse domain (RuvB-S) stretch occupies residues 185 to 255 (NVKDLTDIVS…IAARAMDMLD (71 aa)). The tract at residues 258–336 (NEGFDFMDRK…HFGLQRPDER (79 aa)) is head domain (RuvB-H). Arg313 and Arg318 together coordinate DNA.

This sequence belongs to the RuvB family. As to quaternary structure, homohexamer. Forms an RuvA(8)-RuvB(12)-Holliday junction (HJ) complex. HJ DNA is sandwiched between 2 RuvA tetramers; dsDNA enters through RuvA and exits via RuvB. An RuvB hexamer assembles on each DNA strand where it exits the tetramer. Each RuvB hexamer is contacted by two RuvA subunits (via domain III) on 2 adjacent RuvB subunits; this complex drives branch migration. In the full resolvosome a probable DNA-RuvA(4)-RuvB(12)-RuvC(2) complex forms which resolves the HJ.

Its subcellular location is the cytoplasm. The catalysed reaction is ATP + H2O = ADP + phosphate + H(+). Functionally, the RuvA-RuvB-RuvC complex processes Holliday junction (HJ) DNA during genetic recombination and DNA repair, while the RuvA-RuvB complex plays an important role in the rescue of blocked DNA replication forks via replication fork reversal (RFR). RuvA specifically binds to HJ cruciform DNA, conferring on it an open structure. The RuvB hexamer acts as an ATP-dependent pump, pulling dsDNA into and through the RuvAB complex. RuvB forms 2 homohexamers on either side of HJ DNA bound by 1 or 2 RuvA tetramers; 4 subunits per hexamer contact DNA at a time. Coordinated motions by a converter formed by DNA-disengaged RuvB subunits stimulates ATP hydrolysis and nucleotide exchange. Immobilization of the converter enables RuvB to convert the ATP-contained energy into a lever motion, pulling 2 nucleotides of DNA out of the RuvA tetramer per ATP hydrolyzed, thus driving DNA branch migration. The RuvB motors rotate together with the DNA substrate, which together with the progressing nucleotide cycle form the mechanistic basis for DNA recombination by continuous HJ branch migration. Branch migration allows RuvC to scan DNA until it finds its consensus sequence, where it cleaves and resolves cruciform DNA. In Aeromonas salmonicida (strain A449), this protein is Holliday junction branch migration complex subunit RuvB.